Reading from the N-terminus, the 922-residue chain is Lysine-specific demethylase 4 (922 aa).

Residues 1-15 show a composition bias toward polar residues; the sequence is MASAATTTHFPSSRI. 2 disordered regions span residues 1-21 and 42-61; these read MASA…EPCA and SSSC…MFTD. Positions 87-130 constitute a JmjN domain; it reads VLTFYPTMREFKNFSQYIKKIEQNGGHLKAGIAKIVAPEGWTPR. A 2-oxoglutarate-binding site is contributed by Y213. Residues 223–388 form the JmjC domain; that stretch reads DAQVEEWNMN…YGKDAVLCDC (166 aa). The Fe cation site is built by H265 and E267. N275 and K283 together coordinate 2-oxoglutarate. The Zn(2+) site is built by C314 and H320. K321 serves as a coordination point for 2-oxoglutarate. H356 is a Fe cation binding site. Residues C386 and C388 each coordinate Zn(2+). The tract at residues 435–475 is disordered; the sequence is KRRQSLADASKIAKRARLGASSTATDSDGSSGSSGSEEATE. Low complexity predominate over residues 453-475; that stretch reads GASSTATDSDGSSGSSGSEEATE. The C2HC pre-PHD-type zinc finger occupies 639–675; it reads TTSCQLCELRGGALIPCQIGTDSTWAHVACALFNRRA. The segment at 723–783 adopts a PHD-type; degenerate zinc-finger fold; sequence WECVVCHRTD…GVVMICHKHE (61 aa).

The protein belongs to the JHDM3 histone demethylase family. Requires Fe(2+) as cofactor.

The protein localises to the nucleus. The enzyme catalyses N(6),N(6),N(6)-trimethyl-L-lysyl(9)-[histone H3] + 2 2-oxoglutarate + 2 O2 = N(6)-methyl-L-lysyl(9)-[histone H3] + 2 formaldehyde + 2 succinate + 2 CO2. It catalyses the reaction N(6),N(6),N(6)-trimethyl-L-lysyl(36)-[histone H3] + 2 2-oxoglutarate + 2 O2 = N(6)-methyl-L-lysyl(36)-[histone H3] + 2 formaldehyde + 2 succinate + 2 CO2. Functionally, histone demethylase that specifically demethylates 'Lys-9' and 'Lys-36' residues of histone H3, thereby playing a central role in histone code. Demethylation of Lys residue generates formaldehyde and succinate. Involved in the negative regulation of lifespan in a germline-dependent fashion. This Caenorhabditis elegans protein is Lysine-specific demethylase 4 (jmjd-2).